Here is a 387-residue protein sequence, read N- to C-terminus: uncharacterized protein (387 aa).

The protein resides in the virion. This is an uncharacterized protein from Acanthamoeba polyphaga (Amoeba).